The following is a 236-amino-acid chain: 2-C-methyl-D-erythritol 4-phosphate cytidylyltransferase (236 aa).

This sequence belongs to the IspD/TarI cytidylyltransferase family. IspD subfamily.

The enzyme catalyses 2-C-methyl-D-erythritol 4-phosphate + CTP + H(+) = 4-CDP-2-C-methyl-D-erythritol + diphosphate. Its pathway is isoprenoid biosynthesis; isopentenyl diphosphate biosynthesis via DXP pathway; isopentenyl diphosphate from 1-deoxy-D-xylulose 5-phosphate: step 2/6. Catalyzes the formation of 4-diphosphocytidyl-2-C-methyl-D-erythritol from CTP and 2-C-methyl-D-erythritol 4-phosphate (MEP). In Pseudomonas syringae pv. syringae (strain B728a), this protein is 2-C-methyl-D-erythritol 4-phosphate cytidylyltransferase.